A 1111-amino-acid polypeptide reads, in one-letter code: Cellulose synthase-like protein D4 (1111 aa).

Disordered regions lie at residues 1 to 26 and 175 to 202; these read MASTPPQTSKKVRNNSGSGQTVKFAR and DYSSGALPLPAPGKDQRGNNNNMSMMKR. The segment covering 192–202 has biased composition (polar residues); sequence GNNNNMSMMKR. 2 helical membrane-spanning segments follow: residues 266 to 286 and 297 to 317; these read AIISPYRLLIVIRFVVLCFFL and AIWLWLMSIICELWFGFSWIL. Active-site residues include Asp-397 and Asp-809. The next 6 helical transmembrane spans lie at 891-911, 914-934, 963-983, 1007-1027, 1040-1060, and 1070-1090; these read LFLILYCFLPAFSLFSGQFIV, LSISFLVYLLMITICLIGLAV, LYAVVQGVLKVIAGIEISFTL, LMIPPIVIAMVNIIAIVVAFI, LIGGAFFSFWVLAHLYPFAKG, and TIVFVWAGLIAITISLLWTAI.

It belongs to the glycosyltransferase 2 family. Plant cellulose synthase-like D subfamily.

The protein resides in the golgi apparatus membrane. Functionally, thought to be a Golgi-localized beta-glycan synthase that polymerize the backbones of noncellulosic polysaccharides (hemicelluloses) of plant cell wall. This Arabidopsis thaliana (Mouse-ear cress) protein is Cellulose synthase-like protein D4 (CSLD4).